A 712-amino-acid polypeptide reads, in one-letter code: Dynein regulatory complex protein 1 (712 aa).

Residues 1-34 (MNPPGSLGVLEEKEEEHLAPPILGPSIHSDNPQE) are disordered. Residues 100–388 (AADIREIHRR…QFKELQKAMR (289 aa)) adopt a coiled-coil conformation. Positions 557–591 (HSPSSQEPLDLRAEKERSLVDGKSQEKEPPPSPKL) are disordered. A compositionally biased stretch (basic and acidic residues) spans 565–585 (LDLRAEKERSLVDGKSQEKEP). A coiled-coil region spans residues 663 to 698 (LTQRAELLIENSSLERQNTELQQLLQQYLDTKINSE).

This sequence belongs to the DRC1 family. In terms of assembly, component of the nexin-dynein regulatory complex (N-DRC). Interacts with CCDC65/DRC2, DRC3, GAS8/DRC4 and TCTE1/DRC5.

The protein resides in the cytoplasm. Its subcellular location is the cytoskeleton. It localises to the cilium axoneme. It is found in the flagellum axoneme. In terms of biological role, component of the nexin-dynein regulatory complex (N-DRC) a key regulator of ciliary/flagellar motility which maintains the alignment and integrity of the distal axoneme and regulates microtubule sliding in motile axonemes. Plays a critical role in the assembly of N-DRC and also stabilizes the assembly of multiple inner dynein arms and radial spokes. Coassembles with CCDC65/DRC2 to form a central scaffold needed for assembly of the N-DRC and its attachment to the outer doublet microtubules. The protein is Dynein regulatory complex protein 1 (DRC1) of Bos taurus (Bovine).